A 329-amino-acid chain; its full sequence is Transcription factor TGA2.3 (329 aa).

The segment at 1 to 48 (MADMSPRTDTSTDDTDDNHMLEPGQLALAAASDSDRSKDKHEDQKTLR) is disordered. Basic and acidic residues predominate over residues 33–46 (DSDRSKDKHEDQKT). One can recognise a bZIP domain in the interval 43–87 (DQKTLRRLAQNREAARKSRLRKKAYVQQLENSRLKLTQLEQELQR). The segment at 45 to 65 (KTLRRLAQNREAARKSRLRKK) is basic motif. Residues 71 to 85 (LENSRLKLTQLEQEL) are leucine-zipper. Positions 110 to 326 (ALAFDMEYAR…RALSSLWLAR (217 aa)) constitute a DOG1 domain.

This sequence belongs to the bZIP family. In terms of assembly, interacts with NPR1/NH1 and NPR3/NH3.

The protein localises to the nucleus. Functionally, transcriptional regulator involved in defense response. This chain is Transcription factor TGA2.3, found in Oryza sativa subsp. japonica (Rice).